The sequence spans 266 residues: Beta-lactamase OXA-20 (266 aa).

Positions 1-21 are cleaved as a signal peptide; the sequence is MIIRFLALLFSAVVLVSLGHA. Residue Ser72 is the Acyl-ester intermediate of the active site. N6-carboxylysine is present on Lys75. 210–212 serves as a coordination point for substrate; the sequence is KTG.

This sequence belongs to the class-D beta-lactamase family.

It catalyses the reaction a beta-lactam + H2O = a substituted beta-amino acid. Its activity is regulated as follows. Inhibited by clavulanic acid. This is an oxacillin-hydrolyzing beta-lactamase. In Pseudomonas aeruginosa, this protein is Beta-lactamase OXA-20 (bla).